The primary structure comprises 53 residues: Large ribosomal subunit protein eL40 (53 aa).

Belongs to the eukaryotic ribosomal protein eL40 family.

This is Large ribosomal subunit protein eL40 from Pyrobaculum neutrophilum (strain DSM 2338 / JCM 9278 / NBRC 100436 / V24Sta) (Thermoproteus neutrophilus).